Consider the following 213-residue polypeptide: GTP cyclohydrolase 1 (213 aa).

Cys104, His107, and Cys175 together coordinate Zn(2+).

Belongs to the GTP cyclohydrolase I family. In terms of assembly, toroid-shaped homodecamer, composed of two pentamers of five dimers.

It catalyses the reaction GTP + H2O = 7,8-dihydroneopterin 3'-triphosphate + formate + H(+). The protein operates within cofactor biosynthesis; 7,8-dihydroneopterin triphosphate biosynthesis; 7,8-dihydroneopterin triphosphate from GTP: step 1/1. The protein is GTP cyclohydrolase 1 of Brucella abortus (strain 2308).